The sequence spans 159 residues: C-type lectin BJcuL (159 aa).

The first 24 residues, 1–24, serve as a signal peptide directing secretion; it reads MGRFLFVASSACWFVFLSLSGAKG. 4 disulfides stabilise this stretch: cysteine 27/cysteine 38, cysteine 55/cysteine 155, cysteine 62/cysteine 157, and cysteine 130/cysteine 147. Residues 34–156 form the C-type lectin domain; the sequence is MNGLCYKIFN…CESKNAFLCQ (123 aa). Glutamine 120, aspartate 122, glutamate 128, asparagine 143, and aspartate 144 together coordinate Ca(2+). The Galactose-binding signature appears at 120-122; that stretch reads QPD.

Belongs to the true venom lectin family. In terms of assembly, homodecamer of disulfide-linked dimers arranged in two 5-fold symmetric pentamers. Binds the gentamicin group of aminoglycoside antibiotics at the dimeric interface near the intermolecular disulfide bond. Expressed by the venom gland.

It localises to the secreted. Its activity is regulated as follows. Hemagglutination activity is inhibited by lactose (MIC=2.5 mM), galactose (MIC=10 mM), and raffinose. Is very weakly or not inhibited by gentamicin, kanamycin, glucose and sucrose. Galactose-binding lectin which recognizes specific carbohydrate structures and agglutinates a variety of animal cells by binding to cell-surface glycoproteins and glycolipids. Calcium-dependent lectin. Also binds lactose and raffinose. Shows high hemagglutinating activity on mammalian erythrocytes. It also involved in immunological functions, since it is able of inducing potent neutrophil activation. In vivo, it causes edema and increases vascular permeability after injection into mouse hind paws (10-100 ug/paw). In anesthetized rats, it decreases the blood pressure by approximately 15%, with a rapid return to the resting level. Is an effective inhibitor of cell growth in some cancer cell lines, especially against renal and pancreatic cancer cell lines, human breast and ovarian carcinoma, glioblastoma and a bovine brain microvascular endothelial cell line. The sequence is that of C-type lectin BJcuL from Bothrops jararacussu (Jararacussu).